Consider the following 504-residue polypeptide: MNIFFMFSLLFLATLGSCADDKNPLEECFREADYEEFLEIAKNGLKKTSNPKDIVVVGAGMSGLSAAYVLAGAGHKVTVLEASQLVGGRVRTHRNAKEGWYANLGPMRIPEKHRIVREYIRKFGLELNEFVQETDNGWYFVKNIRKRVGEVKKDPGLLKYPVKPSEAGKSAGQLYQEALGKAVEELKRTNCSYMLNKYDTYSTKEYLIKEGNLSTGAVDMIGDLMNEDSGYYVSFVESMKHDDIFAYEKRFDEIVGGMDQLPTSMYRAIEKSVLFKARVTKIQQNAEKVRVTYQTAAKTLSDVTADYVIVCTTSRAARRINFKPPLPPKKAHALRSVHYRSATKIFLTCTKKFWEDDGIQGGKSTTDLPSRFIYYPNHNFTSGVGVIIAYGIGDDSNFFLSLTLNECADIVFSDLSSIHQLPKNDIQKFCNPSVIQKWSLDRYAMGAITTFTPYQFQDYSKALTAPAGRVYFAGEYTANAHGWIDSTIKSGLTAARDVNQASEL.

The first 18 residues, 1 to 18 (MNIFFMFSLLFLATLGSC), serve as a signal peptide directing secretion. The cysteines at positions 28 and 191 are disulfide-linked. FAD is bound by residues 61–62 (MS), 81–82 (EA), Arg89, and 105–108 (GPMR). Arg108 contributes to the substrate binding site. Asn190 is a glycosylation site (N-linked (GlcNAc...) asparagine). His241 provides a ligand contact to substrate. Val279 is a binding site for FAD. Cys349 and Cys430 are joined by a disulfide. A glycan (N-linked (GlcNAc...) asparagine) is linked at Asn379. Tyr390 contacts substrate. FAD-binding positions include Glu475 and 482–487 (GWIDST). 482–483 (GW) provides a ligand contact to substrate.

It belongs to the flavin monoamine oxidase family. FIG1 subfamily. Homodimer; non-covalently linked. The cofactor is FAD. In terms of tissue distribution, expressed by the venom gland.

It is found in the secreted. The catalysed reaction is an L-alpha-amino acid + O2 + H2O = a 2-oxocarboxylate + H2O2 + NH4(+). Functionally, catalyzes an oxidative deamination of predominantly hydrophobic and aromatic L-amino acids, thus producing hydrogen peroxide that may contribute to the diverse toxic effects of this enzyme. Exhibits diverse biological activities, such as hemorrhage, hemolysis, edema, apoptosis of vascular endothelial cells or tumor cell lines, antibacterial and antiparasitic activities, as well as regulation of platelet aggregation. Its effect on platelets is controversial, since it either induces aggregation or inhibits agonist-induced aggregation. These different effects are probably due to different experimental conditions. The protein is L-amino-acid oxidase of Echis ocellatus (Ocellated saw-scaled viper).